A 266-amino-acid chain; its full sequence is MNHDPFSWGRPADSTYGAYNTQIANAGASPMVNTQQPIVTGTSVISMKYDNGVIIAADNLGSYGSLLRFNGVERLIPVGDNTVVGISGDISDMQHIERLLKDLVTENAYDNPLADAEEALEPSYIFEYLATVMYQRRSKMNPLWNAIIVAGVQSNGDQFLRYVNLLGVTYSSPTLATGFGAHMANPLLRKVVDRESDIPKTTVQVAEEAIVNAMRVLYYRDARSSRNFSLAIIDKNTGLTFKKNLQVENMKWDFAKDIKGYGTQKI.

A propeptide spanning residues 1–33 is cleaved from the precursor; the sequence is MNHDPFSWGRPADSTYGAYNTQIANAGASPMVN.

This sequence belongs to the peptidase T1B family. The 26S proteasome consists of a 20S proteasome core and two 19S regulatory subunits. The 20S proteasome core is composed of 28 subunits that are arranged in four stacked rings, resulting in a barrel-shaped structure. The two end rings are each formed by seven alpha subunits, and the two central rings are each formed by seven beta subunits. The catalytic chamber with the active sites is on the inside of the barrel. Interacts with CIC1.

It is found in the cytoplasm. The protein localises to the nucleus. Its function is as follows. Non-catalytic component of the proteasome which degrades poly-ubiquitinated proteins in the cytoplasm and in the nucleus. It is essential for the regulated turnover of proteins and for the removal of misfolded proteins. The proteasome is a multicatalytic proteinase complex that is characterized by its ability to cleave peptides with Arg, Phe, Tyr, Leu, and Glu adjacent to the leaving group at neutral or slightly basic pH. It has an ATP-dependent proteolytic activity. PRE3 and PRE4 are necessary for the peptidyl-glutamyl-peptide-hydrolyzing activity. This is Proteasome subunit beta type-7 (PRE4) from Saccharomyces cerevisiae (strain ATCC 204508 / S288c) (Baker's yeast).